We begin with the raw amino-acid sequence, 594 residues long: Actin-histidine N-methyltransferase (594 aa).

Residues Met-1–Pro-22 are disordered. Residues Gln-10–Val-20 are compositionally biased toward polar residues. Residues Arg-75, Glu-104 to Phe-106, Arg-254, Asp-275 to His-279, and Ser-325 to Phe-327 contribute to the S-adenosyl-L-methionine site. The SET domain maps to Glu-94–Gly-314. A disordered region spans residues Gly-551–Leu-594.

The protein belongs to the class V-like SAM-binding methyltransferase superfamily. SETD3 actin-histidine methyltransferase family. As to quaternary structure, interacts with MYOD1. Post-translationally, phosphorylated by GSK3B, which is required for recognition by the SCF(FBXW7) complex and subsequent degradation. Ubiquitinated by the SCF(FBXW7) complex following phosphorylation by GSK3B, leading to its degradation by the proteasome. Prominently expressed in the heart and skeletal muscles and is also detected weakly in the stomach, small intestine, and colon.

The protein resides in the cytoplasm. It localises to the nucleus. The catalysed reaction is L-histidyl-[protein] + S-adenosyl-L-methionine = N(tele)-methyl-L-histidyl-[protein] + S-adenosyl-L-homocysteine + H(+). Functionally, protein-histidine N-methyltransferase that specifically mediates 3-methylhistidine (tele-methylhistidine) methylation of actin at 'His-73'. Histidine methylation of actin is required for smooth muscle contraction of the laboring uterus during delivery. Does not have protein-lysine N-methyltransferase activity and probably only catalyzes histidine methylation of actin. The sequence is that of Actin-histidine N-methyltransferase from Mus musculus (Mouse).